A 224-amino-acid chain; its full sequence is Ribose-5-phosphate isomerase A (224 aa).

Residues 32-35 (TGST), 85-88 (DGAD), and 98-101 (KGGG) each bind substrate. Glu107 functions as the Proton acceptor in the catalytic mechanism. Residue Lys125 participates in substrate binding.

It belongs to the ribose 5-phosphate isomerase family. As to quaternary structure, homodimer.

It catalyses the reaction aldehydo-D-ribose 5-phosphate = D-ribulose 5-phosphate. Its pathway is carbohydrate degradation; pentose phosphate pathway; D-ribose 5-phosphate from D-ribulose 5-phosphate (non-oxidative stage): step 1/1. In terms of biological role, catalyzes the reversible conversion of ribose-5-phosphate to ribulose 5-phosphate. The sequence is that of Ribose-5-phosphate isomerase A from Pseudomonas putida (strain GB-1).